The chain runs to 309 residues: Methionyl-tRNA formyltransferase (309 aa).

109 to 112 is a binding site for (6S)-5,6,7,8-tetrahydrofolate; that stretch reads SLLP.

Belongs to the Fmt family.

The enzyme catalyses L-methionyl-tRNA(fMet) + (6R)-10-formyltetrahydrofolate = N-formyl-L-methionyl-tRNA(fMet) + (6S)-5,6,7,8-tetrahydrofolate + H(+). In terms of biological role, attaches a formyl group to the free amino group of methionyl-tRNA(fMet). The formyl group appears to play a dual role in the initiator identity of N-formylmethionyl-tRNA by promoting its recognition by IF2 and preventing the misappropriation of this tRNA by the elongation apparatus. The sequence is that of Methionyl-tRNA formyltransferase from Clostridium perfringens (strain SM101 / Type A).